A 746-amino-acid polypeptide reads, in one-letter code: Centromere protein I (746 aa).

The tract at residues 1–24 is disordered; sequence MATQRVTRNSQQQNRISQGSNSRQ.

It belongs to the CENP-I/CTF3 family. Component of the CENPA-CAD complex, composed of CENPI, CENPK, CENPL, CENPO, CENPP, CENPQ, CENPR and CENPS. The CENPA-CAD complex interacts with the CENPA-NAC complex, at least composed of CENPA, CENPC, CENPH, CENPM, CENPN, CENPT and CENPU. Interacts with SENP6. In terms of processing, sumoylated. Sumoylated form can be polyubiquitinated by RNF4, leading to its degradation. Desumoylation by SENP6 prevents its degradation.

It is found in the nucleus. Its subcellular location is the chromosome. The protein resides in the centromere. Component of the CENPA-CAD (nucleosome distal) complex, a complex recruited to centromeres which is involved in assembly of kinetochore proteins, mitotic progression and chromosome segregation. May be involved in incorporation of newly synthesized CENPA into centromeres via its interaction with the CENPA-NAC complex. Required for the localization of CENPF, MAD1L1 and MAD2 (MAD2L1 or MAD2L2) to kinetochores. Involved in the response of gonadal tissues to follicle-stimulating hormone. This chain is Centromere protein I (Cenpi), found in Mus musculus (Mouse).